A 271-amino-acid polypeptide reads, in one-letter code: NADPH-dependent 7-cyano-7-deazaguanine reductase (271 aa).

Position 81 to 83 (81 to 83 (IES)) interacts with substrate. 83–84 (SK) contributes to the NADPH binding site. C177 serves as the catalytic Thioimide intermediate. Catalysis depends on D184, which acts as the Proton donor. Substrate is bound at residue 216-217 (HE). Residue 245–246 (RG) participates in NADPH binding.

It belongs to the GTP cyclohydrolase I family. QueF type 2 subfamily. Homodimer.

Its subcellular location is the cytoplasm. It catalyses the reaction 7-aminomethyl-7-carbaguanine + 2 NADP(+) = 7-cyano-7-deazaguanine + 2 NADPH + 3 H(+). The protein operates within tRNA modification; tRNA-queuosine biosynthesis. Functionally, catalyzes the NADPH-dependent reduction of 7-cyano-7-deazaguanine (preQ0) to 7-aminomethyl-7-deazaguanine (preQ1). The polypeptide is NADPH-dependent 7-cyano-7-deazaguanine reductase (Xanthomonas oryzae pv. oryzae (strain MAFF 311018)).